A 725-amino-acid chain; its full sequence is Malate synthase G 2 (725 aa).

Residues Val-118, 125–126 (RY), Ser-276, and Arg-313 contribute to the acetyl-CoA site. Residue Arg-340 is the Proton acceptor of the active site. Residues Arg-340, Glu-429, and 454–457 (GFLD) each bind glyoxylate. Mg(2+) is bound by residues Glu-429 and Asp-457. Acetyl-CoA is bound at residue Pro-538. Cys-619 carries the cysteine sulfenic acid (-SOH) modification. The Proton donor role is filled by Asp-633.

Belongs to the malate synthase family. GlcB subfamily. Monomer. The cofactor is Mg(2+).

The protein localises to the cytoplasm. It carries out the reaction glyoxylate + acetyl-CoA + H2O = (S)-malate + CoA + H(+). The protein operates within carbohydrate metabolism; glyoxylate cycle; (S)-malate from isocitrate: step 2/2. Involved in the glycolate utilization. Catalyzes the condensation and subsequent hydrolysis of acetyl-coenzyme A (acetyl-CoA) and glyoxylate to form malate and CoA. This chain is Malate synthase G 2, found in Pseudomonas syringae pv. tomato (strain ATCC BAA-871 / DC3000).